A 144-amino-acid polypeptide reads, in one-letter code: UPF0306 protein Spro_0510 (144 aa).

It belongs to the UPF0306 family.

This Serratia proteamaculans (strain 568) protein is UPF0306 protein Spro_0510.